The primary structure comprises 394 residues: Elongation factor Tu (394 aa).

One can recognise a tr-type G domain in the interval 10–204 (KPHLNVGTIG…TLDTYIEDPV (195 aa)). A G1 region spans residues 19–26 (GHVDHGKT). 19 to 26 (GHVDHGKT) contacts GTP. T26 is a Mg(2+) binding site. A G2 region spans residues 60 to 64 (GITIK). Residues 81–84 (DCPG) are G3. GTP contacts are provided by residues 81–85 (DCPGH) and 136–139 (NKCD). Residues 136–139 (NKCD) are G4. The G5 stretch occupies residues 174-176 (SAL).

This sequence belongs to the TRAFAC class translation factor GTPase superfamily. Classic translation factor GTPase family. EF-Tu/EF-1A subfamily. In terms of assembly, monomer.

Its subcellular location is the cytoplasm. It carries out the reaction GTP + H2O = GDP + phosphate + H(+). Functionally, GTP hydrolase that promotes the GTP-dependent binding of aminoacyl-tRNA to the A-site of ribosomes during protein biosynthesis. This Onion yellows phytoplasma (strain OY-M) protein is Elongation factor Tu.